A 170-amino-acid polypeptide reads, in one-letter code: Crossover junction endodeoxyribonuclease RuvC (170 aa).

Catalysis depends on residues Asp11, Glu71, and Asp143. Asp11, Glu71, and Asp143 together coordinate Mg(2+).

The protein belongs to the RuvC family. Homodimer which binds Holliday junction (HJ) DNA. The HJ becomes 2-fold symmetrical on binding to RuvC with unstacked arms; it has a different conformation from HJ DNA in complex with RuvA. In the full resolvosome a probable DNA-RuvA(4)-RuvB(12)-RuvC(2) complex forms which resolves the HJ. Requires Mg(2+) as cofactor.

Its subcellular location is the cytoplasm. The catalysed reaction is Endonucleolytic cleavage at a junction such as a reciprocal single-stranded crossover between two homologous DNA duplexes (Holliday junction).. Functionally, the RuvA-RuvB-RuvC complex processes Holliday junction (HJ) DNA during genetic recombination and DNA repair. Endonuclease that resolves HJ intermediates. Cleaves cruciform DNA by making single-stranded nicks across the HJ at symmetrical positions within the homologous arms, yielding a 5'-phosphate and a 3'-hydroxyl group; requires a central core of homology in the junction. The consensus cleavage sequence is 5'-(A/T)TT(C/G)-3'. Cleavage occurs on the 3'-side of the TT dinucleotide at the point of strand exchange. HJ branch migration catalyzed by RuvA-RuvB allows RuvC to scan DNA until it finds its consensus sequence, where it cleaves and resolves the cruciform DNA. In Rhizobium meliloti (strain 1021) (Ensifer meliloti), this protein is Crossover junction endodeoxyribonuclease RuvC.